Reading from the N-terminus, the 128-residue chain is Keratin-associated protein 2-1 (128 aa).

The tract at residues 5–112 (CCGSTFSSLS…SVQSPCCRPP (108 aa)) is 10 X 5 AA repeats of C-C-[CDPQRWG]-[APRS]-[CIPSTVD].

This sequence belongs to the KRTAP type 2 family. Interacts with hair keratins.

Functionally, in the hair cortex, hair keratin intermediate filaments are embedded in an interfilamentous matrix, consisting of hair keratin-associated proteins (KRTAP), which are essential for the formation of a rigid and resistant hair shaft through their extensive disulfide bond cross-linking with abundant cysteine residues of hair keratins. The matrix proteins include the high-sulfur and high-glycine-tyrosine keratins. This is Keratin-associated protein 2-1 (KRTAP2-1) from Homo sapiens (Human).